The sequence spans 454 residues: Epsin-1 (454 aa).

The region spanning 11 to 143 (NLVKGYSSTQ…SDDERLNEER (133 aa)) is the ENTH domain. Disordered regions lie at residues 142 to 195 (ERNM…EDYE) and 292 to 350 (YLAS…GNQS). Over residues 149–160 (GRNRKGRRRRGT) the composition is skewed to basic residues. T160 bears the Phosphothreonine mark. Residue S163 is modified to Phosphoserine. UIM domains are found at residues 165 to 184 (ENDD…AEED) and 189 to 208 (KQDE…EELK). T180 is subject to Phosphothreonine. Residues 180-191 (TAEEDERRRKQD) show a composition bias toward basic and acidic residues. A compositionally biased stretch (low complexity) spans 292–302 (YLASMQQQQQA). Composition is skewed to polar residues over residues 303–329 (MSNN…ASSP) and 340–350 (PLIQNRTGNQS). Phosphoserine is present on S328. A Glycyl lysine isopeptide (Lys-Gly) (interchain with G-Cter in ubiquitin) cross-link involves residue K357. Phosphothreonine is present on residues T364, T366, T384, T386, and T388. Residues 384-398 (TKTGTFINSQGTGYR) show a composition bias toward polar residues. Residues 384–405 (TKTGTFINSQGTGYRQVSDDPN) form a disordered region. 2 positions are modified to phosphothreonine; by PRK1: T395 and T415. Positions 418 to 428 (PSTSVVPTQTG) are enriched in polar residues. Positions 418 to 454 (PSTSVVPTQTGYGFGNQSQQQSQNNGSNNRGYTLIDL) are disordered. Residues 432-446 (GNQSQQQSQNNGSNN) are compositionally biased toward low complexity. Positions 447 to 454 (RGYTLIDL) are clathrin-binding.

Belongs to the epsin family. Interacts with EDE1 and PAN1.

The protein localises to the cytoplasm. It is found in the membrane. Binds to membranes enriched in phosphatidylinositol 3,5-bisphosphate (PtdIns(3,5)P2) and phosphatidylinositol 4,5-bisphosphate (PtdIns(4,5)P2). Required for endocytosis and localization of actin. Negatively regulated via phosphorylation. This Saccharomyces cerevisiae (strain ATCC 204508 / S288c) (Baker's yeast) protein is Epsin-1 (ENT1).